The primary structure comprises 226 residues: Small ribosomal subunit protein uS3 (226 aa).

The 69-residue stretch at 36–104 (IRKYLENRLS…KIQINIFEIK (69 aa)) folds into the KH type-2 domain.

Belongs to the universal ribosomal protein uS3 family. Part of the 30S ribosomal subunit. Forms a tight complex with proteins S10 and S14.

Binds the lower part of the 30S subunit head. Binds mRNA in the 70S ribosome, positioning it for translation. The polypeptide is Small ribosomal subunit protein uS3 (Karelsulcia muelleri (strain GWSS) (Sulcia muelleri)).